A 765-amino-acid polypeptide reads, in one-letter code: uncharacterized protein (765 aa).

The signal sequence occupies residues 1 to 22; it reads MKLKGFLAVGVSVFGFSGLLMA. Cysteine 23 carries the N-palmitoyl cysteine lipid modification. Residue cysteine 23 is the site of S-diacylglycerol cysteine attachment. Disordered regions lie at residues 177–203 and 218–255; these read EGTPTSTTVQATVSSRSAEKKGTLEIA and TAQNNSNETTKEQKQVKRSSSSSSTTSTTGETKDTTKS. Residues 179–192 are compositionally biased toward polar residues; sequence TPTSTTVQATVSSR. Over residues 236–247 the composition is skewed to low complexity; the sequence is SSSSSSTTSTTG.

It belongs to the MG185/MG260 family.

It is found in the cell membrane. This is an uncharacterized protein from Mycoplasma genitalium (strain ATCC 33530 / DSM 19775 / NCTC 10195 / G37) (Mycoplasmoides genitalium).